A 130-amino-acid polypeptide reads, in one-letter code: Ribosome-binding factor A (130 aa).

This sequence belongs to the RbfA family. As to quaternary structure, monomer. Binds 30S ribosomal subunits, but not 50S ribosomal subunits or 70S ribosomes.

The protein localises to the cytoplasm. In terms of biological role, one of several proteins that assist in the late maturation steps of the functional core of the 30S ribosomal subunit. Associates with free 30S ribosomal subunits (but not with 30S subunits that are part of 70S ribosomes or polysomes). Required for efficient processing of 16S rRNA. May interact with the 5'-terminal helix region of 16S rRNA. This Prochlorococcus marinus (strain MIT 9312) protein is Ribosome-binding factor A.